The sequence spans 1410 residues: Ribosome-binding protein 1 (1410 aa).

At 1–7 (MDIYDTQ) the chain is on the lumenal side. A helical transmembrane segment spans residues 8–28 (TLGVVVFGGFMVVSAIGIFLV). Residues 29–1410 (STFSMKETSY…GSSSKEGTSV (1382 aa)) lie on the Cytoplasmic side of the membrane. Disordered regions lie at residues 44–90 (NQRK…DPAP) and 129–152 (QEKLASSPKDKKKKEKKVAKVEPA). Basic residues predominate over residues 52 to 63 (THHQKVEKKKKE). Basic and acidic residues predominate over residues 64-88 (KTVEKKGKTKKKEEKPNGKIPDHDP). Lys-148 participates in a covalent cross-link: Glycyl lysine isopeptide (Lys-Gly) (interchain with G-Cter in SUMO2). Ser-159 and Ser-165 each carry phosphoserine. Disordered stretches follow at residues 173–648 (APKE…PLYL) and 895–925 (QSSHASLRADAEKAQEQQQQMAELHSKLQSS). Composition is skewed to polar residues over residues 191–209 (TPATGTTQGKKAEGTQNQS) and 225–238 (TPNQGKKTEGTPNQ). Repeat copies occupy residues 197–206 (TQGKKAEGTQ), 207–216 (NQSKKAEGAP), 217–226 (NQGRKAEGTP), 227–236 (NQGKKTEGTP), 237–246 (NQGKKAEGTP), 247–256 (NQGKKAEGTP), 257–266 (NQGKKAEGAQ), 267–276 (NQGKKVDTTP), 277–286 (NQGKKVEGAP), 287–296 (TQGRKAEGAQ), 297–306 (NQAKKVEGAQ), 307–316 (NQGKKAEGAQ), 317–326 (NQGKKGEGAQ), 327–336 (NQGKKAEGAQ), 337–346 (NQGKKAEGAQ), 347–356 (NQGKKAEGAQ), 357–366 (NQGKKAEGAQ), 367–376 (NQGKKAEGAQ), 377–386 (NQGKKAEGAQ), 387–396 (NQGKKVEGAQ), 397–406 (NQGKKAEGAQ), 407–416 (NQGKKAEGAQ), 417–426 (NQGKKAEGAQ), 427–436 (NQGKKAEGAQ), 437–446 (NQGKKAEGAQ), 447–456 (NQGKKAEGAQ), 457–466 (NQGKKAEGAQ), 467–476 (NQGKKVEGAQ), 477–486 (NQGKKAEGAQ), 487–496 (NQGKKAEGAQ), 497–506 (NQGKKAEGAQ), 507–516 (NQGQKGEGAQ), and 517–526 (NQGKKTEGAQ). The segment at 197 to 604 (TQGKKAEGTQ…NQGKKTESAS (408 aa)) is 41 X 10 AA approximate tandem repeats of [TN]-Q-[GSA]-[KRQT]-K-[ATGSV]-[ED]-[GTAS]-[ATIS]-[PQTAS]. A phosphothreonine mark is found at Thr-225, Thr-235, Thr-245, and Thr-255. Polar residues-rich tracts occupy residues 265-278 (AQNQGKKVDTTPNQ) and 295-519 (AQNQ…QNQG). The segment covering 520-532 (KKTEGAQGKKAER) has biased composition (basic and acidic residues). One copy of the 34; approximate repeat lies at 527-534 (GKKAERSP). Ser-533 bears the Phosphoserine mark. Copy 35 of the repeat occupies 535 to 544 (NQGKKGEGAP). A 36; approximate repeat occupies 545–554 (IQGKKADSVA). The span at 553-567 (VANQGTKVEGITNQG) shows a compositional bias: polar residues. 2 tandem repeats follow at residues 555-564 (NQGTKVEGIT) and 565-574 (NQGKKAEGSP). Positions 568 to 581 (KKAEGSPSEGKKAE) are enriched in basic and acidic residues. Phosphoserine occurs at positions 573 and 583. One copy of the 39; approximate repeat lies at 575–584 (SEGKKAEGSP). Repeat copies occupy residues 585-594 (NQGKKADAAA) and 595-604 (NQGKKTESAS). The span at 602 to 612 (SASVQGRNTDV) shows a compositional bias: polar residues. Position 615 is a phosphoserine (Ser-615). Lys-620 participates in a covalent cross-link: Glycyl lysine isopeptide (Lys-Gly) (interchain with G-Cter in SUMO1). Ser-900 is subject to Phosphoserine. Residue Lys-932 is modified to N6-acetyllysine. A phosphoserine mark is found at Ser-959 and Ser-978. Disordered stretches follow at residues 1093-1122 (GPTLLKHPPAPAEPSSDLASKLREAEETQS), 1260-1287 (EMKSHVEDGDIAGAPASSPEAPPAEQDP), 1330-1362 (EKLRTAGPLESSETEEASQLKERLEKEKKLTSD), and 1378-1410 (QEQLAREKDTVKKLQEQLEKAEDGSSSKEGTSV). Phosphoserine is present on residues Ser-1276 and Ser-1277. Basic and acidic residues-rich tracts occupy residues 1347–1360 (SQLKERLEKEKKLT) and 1381–1403 (LAREKDTVKKLQEQLEKAEDGSS).

It localises to the endoplasmic reticulum membrane. Functionally, acts as a ribosome receptor and mediates interaction between the ribosome and the endoplasmic reticulum membrane. The protein is Ribosome-binding protein 1 (RRBP1) of Homo sapiens (Human).